The primary structure comprises 335 residues: Trans-3-hydroxy-L-proline dehydratase (335 aa).

Cysteine 91 acts as the Proton acceptor in catalysis. Substrate is bound by residues 92 to 93 (GH) and 256 to 257 (GS).

This sequence belongs to the proline racemase family. Homodimer.

The enzyme catalyses trans-3-hydroxy-L-proline = 1-pyrroline-2-carboxylate + H2O. The protein operates within amino-acid degradation. Its function is as follows. Catalyzes the dehydration of trans-3-hydroxy-L-proline (t3LHyp) to Delta(1)-pyrroline-2-carboxylate (Pyr2C). Together with LhpI, is involved in a t3LHyp degradation pathway to L-proline, which allows A.brasilense to grow on t3LHyp as a sole carbon source. The sequence is that of Trans-3-hydroxy-L-proline dehydratase from Azospirillum brasilense.